The sequence spans 90 residues: Small ribosomal subunit protein bS6 (90 aa).

Lysine 33 participates in a covalent cross-link: Isoglutamyl lysine isopeptide (Lys-Gln) (interchain with Q-Cter in protein Pup).

The protein belongs to the bacterial ribosomal protein bS6 family.

In terms of biological role, binds together with bS18 to 16S ribosomal RNA. In Mycolicibacterium smegmatis (strain ATCC 700084 / mc(2)155) (Mycobacterium smegmatis), this protein is Small ribosomal subunit protein bS6 (rpsF).